The primary structure comprises 230 residues: ATP synthase subunit a 1 (230 aa).

5 helical membrane-spanning segments follow: residues Ala20–Thr40, Phe78–Phe98, Ala112–Ile132, Leu174–Phe194, and Gly195–Ala215.

This sequence belongs to the ATPase A chain family. F-type ATPases have 2 components, CF(1) - the catalytic core - and CF(0) - the membrane proton channel. CF(1) has five subunits: alpha(3), beta(3), gamma(1), delta(1), epsilon(1). CF(0) has four main subunits: a, b, b' and c.

The protein resides in the cellular thylakoid membrane. Its function is as follows. Key component of the proton channel; it plays a direct role in the translocation of protons across the membrane. This is ATP synthase subunit a 1 from Crocosphaera subtropica (strain ATCC 51142 / BH68) (Cyanothece sp. (strain ATCC 51142)).